Consider the following 565-residue polypeptide: NAD-dependent malic enzyme (565 aa).

The Proton donor role is filled by Tyr-104. Arg-157 contacts NAD(+). Lys-175 functions as the Proton acceptor in the catalytic mechanism. Positions 246, 247, and 270 each coordinate a divalent metal cation. Asp-270 and Asn-418 together coordinate NAD(+).

It belongs to the malic enzymes family. As to quaternary structure, homotetramer. Mg(2+) serves as cofactor. Mn(2+) is required as a cofactor.

It catalyses the reaction (S)-malate + NAD(+) = pyruvate + CO2 + NADH. The catalysed reaction is oxaloacetate + H(+) = pyruvate + CO2. The protein is NAD-dependent malic enzyme of Escherichia coli O9:H4 (strain HS).